The sequence spans 1145 residues: Probable ATP-dependent RNA helicase DHX34 (1145 aa).

Basic and acidic residues predominate over residues 1 to 14 (MPPPRTREGRGHRD). The segment at 1 to 27 (MPPPRTREGRGHRDRDHHRAPREEEAP) is disordered. In terms of domain architecture, Helicase ATP-binding spans 174-334 (LQTLKEHQVV…FSHAPVVQVP (161 aa)). Position 187–194 (187–194 (GDTGCGKS)) interacts with ATP. A DEAH box motif is present at residues 281 to 284 (DEVH). Residues 370 to 538 (AIDNKYPPEE…ALVLQMKSMS (169 aa)) form the Helicase C-terminal domain. Disordered stretches follow at residues 726-764 (LKRQ…QRAD) and 1091-1114 (NTCP…PQKT). Residues Ser749 and Ser750 each carry the phosphoserine modification.

Belongs to the DEAD box helicase family. DEAH subfamily. In terms of assembly, forms a complex with RUVBL1 and RUVBL2. Part of a complex composed of SMG1, DHX34 and UPF1; within the complex DHX34 acts as a scaffolding protein to facilitate SMG1 phosphorylation of UPF1. Interacts with UPF1, MOV10, EIF4A3, XRN2, SMG6, SMG7, SMG9, UPF3A, UPF3B, CASC3/MLN51, XRN1, DIS3 and DCP1A; the interactions are RNA-independent. Interacts with NCBP1/CPB80; the interaction is RNA-dependent. Interacts (via C-terminus) with SMG1; the interaction is RNA-independent.

It carries out the reaction ATP + H2O = ADP + phosphate + H(+). Functionally, probable ATP-binding RNA helicase. Required for nonsense-mediated decay (NMD) degradation of mRNA transcripts containing premature stop codons. Promotes the phosphorylation of UPF1 along with its interaction with key NMD pathway proteins UPF2 and EIF4A3. Negatively regulates the nucleotide binding ability and ATP hydrolysis of the RUVBL1-RUVBL2 complex via induction of N-terminus conformation changes of the RUVBL2 subunits. The protein is Probable ATP-dependent RNA helicase DHX34 of Mus musculus (Mouse).